The sequence spans 598 residues: Elongation factor 4 (598 aa).

The tr-type G domain occupies 2-184; that stretch reads KNIRNFSIIA…EIVHKIPAPE (183 aa). Residues 14 to 19 and 131 to 134 contribute to the GTP site; these read DHGKST and NKID.

It belongs to the TRAFAC class translation factor GTPase superfamily. Classic translation factor GTPase family. LepA subfamily.

The protein resides in the cell inner membrane. It catalyses the reaction GTP + H2O = GDP + phosphate + H(+). Functionally, required for accurate and efficient protein synthesis under certain stress conditions. May act as a fidelity factor of the translation reaction, by catalyzing a one-codon backward translocation of tRNAs on improperly translocated ribosomes. Back-translocation proceeds from a post-translocation (POST) complex to a pre-translocation (PRE) complex, thus giving elongation factor G a second chance to translocate the tRNAs correctly. Binds to ribosomes in a GTP-dependent manner. The chain is Elongation factor 4 from Pasteurella multocida (strain Pm70).